Here is a 529-residue protein sequence, read N- to C-terminus: MKAAIIDGYVDEPSCLGVPPYVAPYPRYIYGMLKSLDYEATYFTIDHLRAHPETVERLKKFDLAVIIAGIAVPGKYLGGKPLSKKELFSMGLAERNLLVGPITLELSQKELRMLEDVEIEVIDFPFERKLFERLGGEKFNLNAFAARGAEVVRQHPDFPHIICEIETYRGCYWGKCSFCIERVHSLWFRSPEDVLGEVKALYDCGVRHFRLGRQTDFFSYLGEFEGVPRPNPEAMKKFHRAIWDLCPKIKTLHIDNVNPKTIAEHPEESAELIKTIVMYQTPGNVAAMGLESADERVVRKNSLAASPEEVMFAIELINRYGRHPSYNGLPYFLPGINFVIGLKGETKETFELNYRFLEEVMERNLLLRRINIRQVKIFPGTPMEKEGDRRLKKHRKEFIAFKNRVRENIDTPMLKKILPKGRRITDLRVEVEGKISYARQLATYPILVGLVGKYPRNLYVDARVVDYGHRSVTAVEADLDVNKATLEQLEFLLGKVGREVYMRRPIGSDAELEAIGGKEALVYLKVGGE.

The Radical SAM core domain occupies 157-410 (DFPHIICEIE…FKNRVRENID (254 aa)). [4Fe-4S] cluster contacts are provided by C171, C176, and C179.

It depends on [4Fe-4S] cluster as a cofactor.

This is an uncharacterized protein from Archaeoglobus fulgidus (strain ATCC 49558 / DSM 4304 / JCM 9628 / NBRC 100126 / VC-16).